The chain runs to 144 residues: Cytochrome c-type biogenesis protein CcmE (144 aa).

Residues 1–7 (MKPRHKR) lie on the Cytoplasmic side of the membrane. A helical; Signal-anchor for type II membrane protein membrane pass occupies residues 8–28 (ALMIVAALAVIGIAALLILNA). The Extracellular portion of the chain corresponds to 29 to 144 (LNSNIALYVT…EQAQKNGSAK (116 aa)). The heme site is built by histidine 121 and tyrosine 125.

The protein belongs to the CcmE/CycJ family.

It localises to the cell membrane. Functionally, heme chaperone required for the biogenesis of c-type cytochromes. Transiently binds heme delivered by CcmC and transfers the heme to apo-cytochromes in a process facilitated by CcmF and CcmH. The chain is Cytochrome c-type biogenesis protein CcmE from Polynucleobacter asymbioticus (strain DSM 18221 / CIP 109841 / QLW-P1DMWA-1) (Polynucleobacter necessarius subsp. asymbioticus).